Here is a 1148-residue protein sequence, read N- to C-terminus: MDIRKFFGVIPSGKKLVSETVKKNEKTKSDEETLKAKKGIKEIKVNSSRKEDDFKQKQPSKKKRIIYDSDSESEETLQVKNAKKPPEKLPVSSKPGKISRQDPVTYISETDEEDDFMCKKAASKSKENGRSTNSHLGTSNMKKNEENTKTKNKPLSPIKLTPTSVLDYFGTGSVQRSNKKMVASKRKELSQNTDESGLNDEAIAKQLQLDEDAELERQLHEDEEFARTLAMLDEEPKTKKARKDTEAGETFSSVQANLSKAEKHKYPHKVKTAQVSDERKSYSPRKQSKYESSKESQQHSKSSADKIGEVSSPKASSKLAIMKRKEESSYKEIEPVASKRKENAIKLKGETKTPKKTKSSPAKKESVSPEDSEKKRTNYQAYRSYLNREGPKALGSKEIPKGAENCLEGLIFVITGVLESIERDEAKSLIERYGGKVTGNVSKKTNYLVMGRDSGQSKSDKAAALGTKIIDEDGLLNLIRTMPGKKSKYEIAVETEMKKESKLERTPQKNVQGKRKISPSKKESESKKSRPTSKRDSLAKTIKKETDVFWKSLDFKEQVAEETSGDSKARNLADDSSENKVENLLWVDKYKPTSLKTIIGQQGDQSCANKLLRWLRNWQKSSSEDKKHAAKFGKFSGKDDGSSFKAALLSGPPGVGKTTTASLVCQELGYSYVELNASDTRSKSSLKAIVAESLNNTSIKGFYSNGAASSVSTKHALIMDEVDGMAGNEDRGGIQELIGLIKHTKIPIICMCNDRNHPKIRSLVHYCFDLRFQRPRVEQIKGAMMSIAFKEGLKIPPPAMNEIILGANQDIRQVLHNLSMWCARSKALTYDQAKADSHRAKKDIKMGPFDVARKVFAAGEETAHMSLVDKSDLFFHDYSIAPLFVQENYIHVKPVAAGGDMKKHLMLLSRAADSICDGDLVDSQIRSKQNWSLLPAQAIYASVLPGELMRGYMTQFPTFPSWLGKHSSTGKHDRIVQDLALHMSLRTYSSKRTVNMDYLSLLRDALVQPLTSQGVDGVQDVVALMDTYYLMKEDFENIMEISSWGGKPSPFSKLDPKVKAAFTRAYNKEAHLTPYSLQAIKASRHSTSPSLDSEYNEELNEDDSQSDEKDQDAIETDAMIKKKTKSSKPSKPEKDKEPRKGKGKSSKK.

Over residues 46–56 (NSSRKEDDFKQ) the composition is skewed to basic and acidic residues. Disordered regions lie at residues 46–201 (NSSR…LNDE) and 228–380 (TLAM…TNYQ). Residue K50 forms a Glycyl lysine isopeptide (Lys-Gly) (interchain with G-Cter in SUMO2) linkage. Y67 carries the phosphotyrosine modification. Phosphoserine is present on residues S69, S71, S73, and S108. At T110 the chain carries Phosphothreonine. The span at 130-141 (RSTNSHLGTSNM) shows a compositional bias: polar residues. A Phosphoserine modification is found at S156. Phosphothreonine is present on residues T161 and T163. A phosphoserine mark is found at S164, S173, and S190. Residues 234–246 (EEPKTKKARKDTE) show a composition bias toward basic and acidic residues. S253 is subject to Phosphoserine. The span at 262 to 271 (EKHKYPHKVK) shows a compositional bias: basic residues. Residues S281 and S283 each carry the phosphoserine modification. The span at 288–308 (SKYESSKESQQHSKSSADKIG) shows a compositional bias: basic and acidic residues. Position 312 is a phosphoserine (S312). Basic and acidic residues-rich tracts occupy residues 323–353 (KRKE…ETKT) and 362–376 (AKKE…EKKR). S368 bears the Phosphoserine mark. The region spanning 402–492 (GAENCLEGLI…PGKKSKYEIA (91 aa)) is the BRCT domain. 2 stretches are compositionally biased toward basic and acidic residues: residues 496-507 (EMKKESKLERTP) and 520-538 (SKKE…RDSL). The interval 496–538 (EMKKESKLERTPQKNVQGKRKISPSKKESESKKSRPTSKRDSL) is disordered. S537 carries the phosphoserine modification. 650 to 657 (SGPPGVGK) contacts ATP. The interval 1081 to 1148 (KASRHSTSPS…RKGKGKSSKK (68 aa)) is disordered. A compositionally biased stretch (acidic residues) spans 1094 to 1105 (EYNEELNEDDSQ). Residues S1104 and S1106 each carry the phosphoserine modification. The Nuclear localization signal signature appears at 1120 to 1124 (IKKKT). Residues 1130–1140 (SKPEKDKEPRK) show a composition bias toward basic and acidic residues.

Belongs to the activator 1 large subunit family. In terms of assembly, large subunit of the RFC complex, an heteropentameric complex consisting of RFC1 and four small subunits RFC2, RFC3, RFC4 and RFC5; the RFC complex interacts with PCNA and the interaction involves RFC1. Wide tissue distribution. Undetectable in placental tissue.

It localises to the nucleus. Functionally, subunit of the replication factor C (RFC) complex which acts during elongation of primed DNA templates by DNA polymerases delta and epsilon, and is necessary for ATP-dependent loading of proliferating cell nuclear antigen (PCNA) onto primed DNA. This subunit binds to the primer-template junction. Binds the PO-B transcription element as well as other GA rich DNA sequences. Can bind single- or double-stranded DNA. This Homo sapiens (Human) protein is Replication factor C subunit 1 (RFC1).